A 412-amino-acid polypeptide reads, in one-letter code: Argininosuccinate synthase (412 aa).

Residues 16–24 and Ala44 each bind ATP; that span reads AYSGGLDTS. Positions 96 and 101 each coordinate L-citrulline. ATP is bound at residue Gly126. The L-aspartate site is built by Thr128, Asn132, and Asp133. Residue Asn132 coordinates L-citrulline. 5 residues coordinate L-citrulline: Arg136, Ser185, Ser194, Glu270, and Tyr282.

It belongs to the argininosuccinate synthase family. Type 1 subfamily. As to quaternary structure, homotetramer.

It is found in the cytoplasm. The enzyme catalyses L-citrulline + L-aspartate + ATP = 2-(N(omega)-L-arginino)succinate + AMP + diphosphate + H(+). It functions in the pathway amino-acid biosynthesis; L-arginine biosynthesis; L-arginine from L-ornithine and carbamoyl phosphate: step 2/3. In Shewanella baltica (strain OS195), this protein is Argininosuccinate synthase.